A 331-amino-acid polypeptide reads, in one-letter code: MVKKIGVLTSGGDAPGMNAAIRGVVRAALSEGLEVYGIEDGYLGLYHNRMKQLDRYSVSDMINRGGTFLGSARFPEFRDPEIRKIALQNMKERGIDGLVVIGGDGSYAGADLLTKEGGIHCVGLPGTIDNDVAGTDYTIGFFTALETVVEAIDRLRDTSSSHQRISIVEVMGRFCGDLTLAAAIAGGCEFIAIPEVEFKREDLVKEIKAGIAKGKKHAIVAITEKLDNIDELAKYIEKETDRETRGTVLGHIQRGGAPVAYDRILASRMGAYAVDLLVNKISPPLNFSSGGFCVGIQNEKMVHELISVCIAPENKKSKFKEDWYDTAKKLF.

Gly12 provides a ligand contact to ATP. ADP is bound by residues 22-26 and 55-60; these read RGVVR and RYSVSD. Residues 73–74 and 103–106 contribute to the ATP site; these read RF and GDGS. Residue Asp104 coordinates Mg(2+). 127-129 contacts substrate; sequence TID. The active-site Proton acceptor is Asp129. Arg156 is a binding site for ADP. Substrate-binding positions include Arg164 and 171–173; that span reads MGR. Residues 187 to 189, Lys213, and 215 to 217 each bind ADP; these read GCE and KKH. Substrate-binding positions include Glu224, Arg245, and 251-254; that span reads HIQR.

It belongs to the phosphofructokinase type A (PFKA) family. ATP-dependent PFK group I subfamily. Prokaryotic clade 'B1' sub-subfamily. As to quaternary structure, homotetramer. Mg(2+) serves as cofactor.

The protein localises to the cytoplasm. The catalysed reaction is beta-D-fructose 6-phosphate + ATP = beta-D-fructose 1,6-bisphosphate + ADP + H(+). The protein operates within carbohydrate degradation; glycolysis; D-glyceraldehyde 3-phosphate and glycerone phosphate from D-glucose: step 3/4. With respect to regulation, allosterically activated by ADP and other diphosphonucleosides, and allosterically inhibited by phosphoenolpyruvate. Catalyzes the phosphorylation of D-fructose 6-phosphate to fructose 1,6-bisphosphate by ATP, the first committing step of glycolysis. The polypeptide is ATP-dependent 6-phosphofructokinase (Yersinia enterocolitica serotype O:8 / biotype 1B (strain NCTC 13174 / 8081)).